The following is a 316-amino-acid chain: Thymidylate synthase (316 aa).

DUMP is bound by residues arginine 23 and arginine 178–arginine 179. Cysteine 198 acts as the Nucleophile in catalysis. DUMP contacts are provided by residues arginine 218–aspartate 221, asparagine 229, and histidine 259–tyrosine 261. (6R)-5,10-methylene-5,6,7,8-tetrahydrofolate is bound at residue aspartate 221. Alanine 315 serves as a coordination point for (6R)-5,10-methylene-5,6,7,8-tetrahydrofolate.

Belongs to the thymidylate synthase family. Bacterial-type ThyA subfamily. In terms of assembly, homodimer.

It is found in the cytoplasm. It catalyses the reaction dUMP + (6R)-5,10-methylene-5,6,7,8-tetrahydrofolate = 7,8-dihydrofolate + dTMP. The protein operates within pyrimidine metabolism; dTTP biosynthesis. Its function is as follows. Catalyzes the reductive methylation of 2'-deoxyuridine-5'-monophosphate (dUMP) to 2'-deoxythymidine-5'-monophosphate (dTMP) while utilizing 5,10-methylenetetrahydrofolate (mTHF) as the methyl donor and reductant in the reaction, yielding dihydrofolate (DHF) as a by-product. This enzymatic reaction provides an intracellular de novo source of dTMP, an essential precursor for DNA biosynthesis. This Lacticaseibacillus casei (Lactobacillus casei) protein is Thymidylate synthase.